Consider the following 151-residue polypeptide: Myosin light polypeptide 6 (151 aa).

Residue cysteine 2 is modified to N-acetylcysteine. EF-hand domains are found at residues 7–42 (EQTA…LGQN), 84–119 (GCFE…LGEK), and 119–151 (KMTE…VLSG).

As to quaternary structure, myosin is a hexamer of 2 heavy chains and 4 light chains.

In terms of biological role, regulatory light chain of myosin. Does not bind calcium. The protein is Myosin light polypeptide 6 (MYL6) of Gallus gallus (Chicken).